We begin with the raw amino-acid sequence, 534 residues long: Protein BFR2 (534 aa).

Positions Glu-27–His-148 are disordered. Residues Ser-41 and Ser-44 each carry the phosphoserine modification. Basic and acidic residues predominate over residues Glu-52–Asp-77. The stretch at Ser-86 to Ala-161 forms a coiled coil. 2 stretches are compositionally biased toward acidic residues: residues Glu-93–Ala-114 and Ser-121–Glu-142. Ser-366, Ser-372, and Ser-379 each carry phosphoserine.

The protein belongs to the AATF family.

Its subcellular location is the nucleus. It is found in the nucleolus. In terms of biological role, involved in endoplasmic reticulum to Golgi transport. Involved in a protein-transport step blocked by brefeldin A, which disrupts the Golgi apparatus and its incoming protein flux. May also be involved for mass growth or cell proliferation. The sequence is that of Protein BFR2 (BFR2) from Saccharomyces cerevisiae (strain ATCC 204508 / S288c) (Baker's yeast).